A 180-amino-acid chain; its full sequence is Large ribosomal subunit protein uL6 (180 aa).

This sequence belongs to the universal ribosomal protein uL6 family. In terms of assembly, part of the 50S ribosomal subunit.

This protein binds to the 23S rRNA, and is important in its secondary structure. It is located near the subunit interface in the base of the L7/L12 stalk, and near the tRNA binding site of the peptidyltransferase center. This Prosthecochloris aestuarii (strain DSM 271 / SK 413) protein is Large ribosomal subunit protein uL6.